Reading from the N-terminus, the 384-residue chain is Guanine nucleotide-binding protein alpha-1 subunit (384 aa).

The N-myristoyl glycine moiety is linked to residue G2. C5 carries S-palmitoyl cysteine lipidation. The 347-residue stretch at 38–384 folds into the G-alpha domain; that stretch reads HIRKLLLLGA…RRNLFEAGLL (347 aa). The G1 motif stretch occupies residues 41-54; it reads KLLLLGAGESGKST. Positions 49, 50, 51, 52, 53, 54, 163, 188, 194, 222, 288, 289, 291, and 356 each coordinate GTP. S53 contributes to the Mg(2+) binding site. Positions 186–194 are G2 motif; the sequence is DVLLARVRT. T194 is a Mg(2+) binding site. Positions 215 to 224 are G3 motif; the sequence is YRLFDVGGQR. The interval 284 to 291 is G4 motif; it reads MLFLNKFD. Residues 354–359 form a G5 motif region; that stretch reads TTALDQ.

Belongs to the G-alpha family. As to quaternary structure, g proteins are composed of 3 units; alpha, beta and gamma. The alpha chain contains the guanine nucleotide binding site. It depends on Mg(2+) as a cofactor.

Functionally, guanine nucleotide-binding proteins (G proteins) are involved as modulators or transducers in various transmembrane signaling systems. This Pisum sativum (Garden pea) protein is Guanine nucleotide-binding protein alpha-1 subunit (GPA1).